Reading from the N-terminus, the 1275-residue chain is MGSNTESDAEKALGSRLDYDLMMAEEYILSDVEKNFILSCERGDLPGVKKILEEYQGTDKFNINCTDPMNRSALISAIENENFDLMVILLEHNIEVGDALLHAISEEYVEAVEELLQWEETNHKEGQPYSWEAVDRSKSTFTVDITPLILAAHRNNYEILKILLDRGATLPMPHDVKCGCDECVTSQMTDSLRHSQSRINAYRALSASSLIALSSRDPVLTAFQLSWELKRLQAMESEFRAEYTEMRQMVQDFGTSLLDHARTSMELEVMLNFNHEPSHDIWCLGQRQTLERLKLAIRYKQKTFVAHPNVQQLLAAIWYDGLPGFRRKQASQQLMDVVKLGCSFPIYSLKYILAPDSEGAKFMRKPFVKFITHSCSYMFFLMLLGAASLRVVQITFELLAFPWMLTMLEDWRKHERGSLPGPIELAIITYIMALIFEELKSLYSDGLFEYIMDLWNIVDYISNMFYVTWILCRATAWVIVHRDLWFRGIDPYFPREHWHPFDPMLLSEGAFAAGMVFSYLKLVHIFSINPHLGPLQVSLGRMIIDIIKFFFIYTLVLFAFGCGLNQLLWYYAELEKNKCYHLHPDVADFDDQEKACTIWRRFSNLFETSQSLFWASFGLVDLVSFDLAGIKSFTRFWALLMFGSYSVINIIVLLNMLIAMMSNSYQIISERADTEWKFARSQLWMSYFEDGGTIPPPFNLCPNMKMLRKTLGRKRPSRTKSFMRKSMERAQTLHDKVMKLLVRRYITAEQRRRDDYGITEDDIIEVRQDISSLRFELLEIFTNNNWDVPDIEKKSQGVARTTKGKVMERRILKDFQIGFVENLKQEMSESESGRDIFSSLAKVIGRKKTQKGDKDWNAIARKNTFASDPIGSKRSSMQRHSQRSLRRKIIEQANEGLQMNQTQLIEFNPNLGDVTRATRVAYVKFMRKKMAADEVSLADDEGAPNGEGEKKPLDASGSKKSITSGGTGGGASMLAAAALRASVKNVDEKSGADGKPGTMGKPTDDKKAGDDKDKQQPPKDSKPSAGGPKPGDQKPTPGAGAPKPQAAGTISKPGESQKKDAPAPPTKPGDTKPAAPKPGESAKPEAAAKKEESSKTEASKPAATNGAAKSAAPSAPSDAKPDSKLKPGAAGAPEATKATNGASKPDEKKSGPEEPKKAAGDSKPGDDAKDKDKKPGDDKDKKPGDDKDKKPADNNDKKPADDKDKKPGDDKDKKPGDDKDKKPSDDKDKKPADDKDKKPAAAPLKPAIKVGQSSAAAGGERGKSTVTGRMISGWL.

Over 1 to 366 (MGSNTESDAE…SEGAKFMRKP (366 aa)) the chain is Cytoplasmic. 2 ANK repeats span residues 69–98 (MNRS…EVGD) and 143–172 (VDIT…TLPM). The chain crosses the membrane as a helical span at residues 367–387 (FVKFITHSCSYMFFLMLLGAA). The Extracellular segment spans residues 388–418 (SLRVVQITFELLAFPWMLTMLEDWRKHERGS). The chain crosses the membrane as a helical span at residues 419–439 (LPGPIELAIITYIMALIFEEL). Residues 440–450 (KSLYSDGLFEY) are Cytoplasmic-facing. The chain crosses the membrane as a helical span at residues 451 to 471 (IMDLWNIVDYISNMFYVTWIL). Residues 472–541 (CRATAWVIVH…LGPLQVSLGR (70 aa)) lie on the Extracellular side of the membrane. Residues 542 to 562 (MIIDIIKFFFIYTLVLFAFGC) form a helical membrane-spanning segment. At 563–609 (GLNQLLWYYAELEKNKCYHLHPDVADFDDQEKACTIWRRFSNLFETS) the chain is on the cytoplasmic side. A helical transmembrane segment spans residues 610–630 (QSLFWASFGLVDLVSFDLAGI). The Extracellular portion of the chain corresponds to 631 to 637 (KSFTRFW). The chain crosses the membrane as a helical span at residues 638 to 658 (ALLMFGSYSVINIIVLLNMLI). The Cytoplasmic segment spans residues 659–1275 (AMMSNSYQII…VTGRMISGWL (617 aa)). Residues 933-1275 (DEVSLADDEG…VTGRMISGWL (343 aa)) form a disordered region. 2 stretches are compositionally biased toward low complexity: residues 955–964 (ASGSKKSITS) and 972–982 (SMLAAAALRAS). The segment covering 1002-1022 (PTDDKKAGDDKDKQQPPKDSK) has biased composition (basic and acidic residues). Residues 1033-1049 (QKPTPGAGAPKPQAAGT) show a composition bias toward low complexity. Residues 1080-1098 (ESAKPEAAAKKEESSKTEA) show a composition bias toward basic and acidic residues. The span at 1099 to 1118 (SKPAATNGAAKSAAPSAPSD) shows a compositional bias: low complexity. Positions 1144 to 1239 (KPDEKKSGPE…KPADDKDKKP (96 aa)) are enriched in basic and acidic residues.

Belongs to the transient receptor (TC 1.A.4) family. STrpC subfamily. The C-terminus interacts with a PDZ domain of inaD to form the core of the inaD signaling complex. Other members of the complex include norpA (PLC), inaC (PKC), and possibly trpl, ninaC, Fkbp59, calmodulin and rhodopsin. Forms homomultimers and heteromultimers with trpl. Interaction with trpl is mediated in part by the N-terminal region and the transmembrane domains. Also interacts, though to a lower extent, with Trpgamma. Post-translationally, phosphorylated by inaC. Expressed predominantly in the rhabdomeres of photoreceptor cells. Expressed in the third antennal segment and in the olfactory segment at approximately 70 hours after puparium formation during antennal development.

The protein localises to the cell membrane. It is found in the cell projection. The protein resides in the rhabdomere membrane. Functionally, a light-sensitive calcium channel that is required for inositide-mediated Ca(2+) entry in the retina during phospholipase C (PLC)-mediated phototransduction. Ca(2+) influx may then feed back and inhibit PLC, thereby facilitating phosphatidylinositol 4,5 bisphosphate (PIP2) recycling. Trp and trpl act together in the light response, though it is unclear whether as heteromultimers or as distinct units, and are activated by fatty acids and metabolic stress. Also required for olfactory adaptation and may be involved in olfactory system development. In Drosophila melanogaster (Fruit fly), this protein is Transient receptor potential protein (trp).